The sequence spans 147 residues: Methylglyoxal synthase (147 aa).

Residues 4-147 (VSVPATKRIA…LLNFELLCES (144 aa)) form the MGS-like domain. Substrate-binding positions include H17, K21, 43 to 46 (TGTT), and 63 to 64 (SG). The active-site Proton donor/acceptor is the D69. H96 lines the substrate pocket.

It belongs to the methylglyoxal synthase family.

It carries out the reaction dihydroxyacetone phosphate = methylglyoxal + phosphate. Its function is as follows. Catalyzes the formation of methylglyoxal from dihydroxyacetone phosphate. This Leptospira borgpetersenii serovar Hardjo-bovis (strain JB197) protein is Methylglyoxal synthase.